A 623-amino-acid chain; its full sequence is Chaperone protein DnaK (623 aa).

Residues 582–603 (QQQQAAEQAAQQQSGGQQASGS) show a composition bias toward low complexity. The disordered stretch occupies residues 582–623 (QQQQAAEQAAQQQSGGQQASGSNPGKDPNVVDADYEVVNDKK). Acidic residues predominate over residues 614-623 (ADYEVVNDKK).

The protein belongs to the heat shock protein 70 family.

In terms of biological role, acts as a chaperone. The polypeptide is Chaperone protein DnaK (Methanocella arvoryzae (strain DSM 22066 / NBRC 105507 / MRE50)).